Consider the following 650-residue polypeptide: DNA mismatch repair protein MutL (650 aa).

2 disordered regions span residues 358–392 and 408–448; these read EASQ…QPLV and QPRP…QSAA. Positions 367-384 are enriched in pro residues; it reads TPQPRPALTPGHPDPPPQ. Low complexity predominate over residues 430–444; the sequence is PYAPIAAAPVPASEP.

It belongs to the DNA mismatch repair MutL/HexB family.

This protein is involved in the repair of mismatches in DNA. It is required for dam-dependent methyl-directed DNA mismatch repair. May act as a 'molecular matchmaker', a protein that promotes the formation of a stable complex between two or more DNA-binding proteins in an ATP-dependent manner without itself being part of a final effector complex. In Geobacter sp. (strain M21), this protein is DNA mismatch repair protein MutL.